The sequence spans 434 residues: 3-phosphoshikimate 1-carboxyvinyltransferase (434 aa).

3-phosphoshikimate is bound by residues K22, S23, and R27. K22 lines the phosphoenolpyruvate pocket. Phosphoenolpyruvate contacts are provided by G93 and R121. Residues S168, S169, Q170, S199, D320, and K347 each contribute to the 3-phosphoshikimate site. Q170 provides a ligand contact to phosphoenolpyruvate. The active-site Proton acceptor is the D320. Positions 351, 394, and 419 each coordinate phosphoenolpyruvate.

It belongs to the EPSP synthase family. As to quaternary structure, monomer.

It localises to the cytoplasm. The catalysed reaction is 3-phosphoshikimate + phosphoenolpyruvate = 5-O-(1-carboxyvinyl)-3-phosphoshikimate + phosphate. It functions in the pathway metabolic intermediate biosynthesis; chorismate biosynthesis; chorismate from D-erythrose 4-phosphate and phosphoenolpyruvate: step 6/7. Its function is as follows. Catalyzes the transfer of the enolpyruvyl moiety of phosphoenolpyruvate (PEP) to the 5-hydroxyl of shikimate-3-phosphate (S3P) to produce enolpyruvyl shikimate-3-phosphate and inorganic phosphate. In Burkholderia orbicola (strain MC0-3), this protein is 3-phosphoshikimate 1-carboxyvinyltransferase.